A 98-amino-acid polypeptide reads, in one-letter code: NADH-ubiquinone oxidoreductase chain 4L (98 aa).

3 helical membrane passes run Met-1–Met-21, Ser-29–Met-49, and Ile-61–Ile-81.

Belongs to the complex I subunit 4L family. Core subunit of respiratory chain NADH dehydrogenase (Complex I) which is composed of 45 different subunits.

The protein localises to the mitochondrion inner membrane. The catalysed reaction is a ubiquinone + NADH + 5 H(+)(in) = a ubiquinol + NAD(+) + 4 H(+)(out). Core subunit of the mitochondrial membrane respiratory chain NADH dehydrogenase (Complex I) which catalyzes electron transfer from NADH through the respiratory chain, using ubiquinone as an electron acceptor. Part of the enzyme membrane arm which is embedded in the lipid bilayer and involved in proton translocation. The protein is NADH-ubiquinone oxidoreductase chain 4L (MT-ND4L) of Procyon lotor (Raccoon).